The sequence spans 68 residues: Large ribosomal subunit protein uL29 (68 aa).

Belongs to the universal ribosomal protein uL29 family.

This Nitrobacter hamburgensis (strain DSM 10229 / NCIMB 13809 / X14) protein is Large ribosomal subunit protein uL29.